We begin with the raw amino-acid sequence, 128 residues long: Otoraplin (128 aa).

A signal peptide spans 1–18 (MARILILLLGGLVVLCAG). 2 disulfides stabilise this stretch: C32/C37 and C55/C127. The SH3 domain occupies 39–110 (YTISLARAQE…PSNLVKEQRV (72 aa)).

It belongs to the MIA/OTOR family. In terms of tissue distribution, highly expressed in cochlea.

The protein localises to the secreted. The chain is Otoraplin (Otor) from Mus musculus (Mouse).